Here is a 329-residue protein sequence, read N- to C-terminus: 31 kDa immunogenic protein (329 aa).

The first 28 residues, 1–28 (MKFGSKIRRLAVAAVAGAIALGASFAVA), serve as a signal peptide directing secretion.

The polypeptide is 31 kDa immunogenic protein (bcsP31) (Brucella abortus biovar 1 (strain 9-941)).